Consider the following 209-residue polypeptide: Ribonuclease HII (209 aa).

Residues 25–209 (RRIAGIDEAG…ATFRGVREYL (185 aa)) form the RNase H type-2 domain. A divalent metal cation contacts are provided by D31, E32, and D123.

The protein belongs to the RNase HII family. Mn(2+) serves as cofactor. It depends on Mg(2+) as a cofactor.

It localises to the cytoplasm. It carries out the reaction Endonucleolytic cleavage to 5'-phosphomonoester.. Functionally, endonuclease that specifically degrades the RNA of RNA-DNA hybrids. This is Ribonuclease HII from Syntrophotalea carbinolica (strain DSM 2380 / NBRC 103641 / GraBd1) (Pelobacter carbinolicus).